Consider the following 525-residue polypeptide: Probable protein kinase UbiB (525 aa).

In terms of domain architecture, Protein kinase spans 118–500; it reads EFERVPVASA…QRRTNRLLQA (383 aa). ATP-binding positions include 124–132 and Lys150; that span reads VASASIAQV. Asp285 serves as the catalytic Proton acceptor. Residues 501–521 form a helical membrane-spanning segment; the sequence is LLVFGLAVGAGAVIARVLIVL.

This sequence belongs to the ABC1 family. UbiB subfamily.

It localises to the cell inner membrane. It functions in the pathway cofactor biosynthesis; ubiquinone biosynthesis [regulation]. Functionally, is probably a protein kinase regulator of UbiI activity which is involved in aerobic coenzyme Q (ubiquinone) biosynthesis. The polypeptide is Probable protein kinase UbiB (Burkholderia mallei (strain SAVP1)).